Consider the following 447-residue polypeptide: UDP-N-acetylglucosamine 1-carboxyvinyltransferase (447 aa).

K27 to N28 contributes to the phosphoenolpyruvate binding site. A UDP-N-acetyl-alpha-D-glucosamine-binding site is contributed by R97. Catalysis depends on C121, which acts as the Proton donor. The residue at position 121 (C121) is a 2-(S-cysteinyl)pyruvic acid O-phosphothioketal. UDP-N-acetyl-alpha-D-glucosamine is bound by residues R126–L130, D314, and V336.

The protein belongs to the EPSP synthase family. MurA subfamily.

The protein resides in the cytoplasm. The enzyme catalyses phosphoenolpyruvate + UDP-N-acetyl-alpha-D-glucosamine = UDP-N-acetyl-3-O-(1-carboxyvinyl)-alpha-D-glucosamine + phosphate. It participates in cell wall biogenesis; peptidoglycan biosynthesis. Cell wall formation. Adds enolpyruvyl to UDP-N-acetylglucosamine. This chain is UDP-N-acetylglucosamine 1-carboxyvinyltransferase, found in Nostoc sp. (strain PCC 7120 / SAG 25.82 / UTEX 2576).